The following is a 1246-amino-acid chain: Zinc finger protein 687a (1246 aa).

Basic and acidic residues predominate over residues 24 to 47; that stretch reads KEAIQSDTHGNHNEHSSVVGKERS. The disordered stretch occupies residues 24–387; that stretch reads KEAIQSDTHG…PTLVESASDA (364 aa). 2 stretches are compositionally biased toward polar residues: residues 88 to 111 and 163 to 195; these read GEFS…SSVP and AFTN…FSSK. A compositionally biased stretch (low complexity) spans 287 to 301; that stretch reads SSTNPTSLTSTNNLP. Positions 302 to 317 are enriched in basic and acidic residues; the sequence is VEEKDLEHIIEERDSP. Residues 326–338 show a composition bias toward polar residues; sequence QSRTSLPSNSQGA. Composition is skewed to basic and acidic residues over residues 341-350 and 360-375; these read SKQRITREEA and MQEK…EGKS. The C2H2-type 1 zinc finger occupies 587–619; that stretch reads YRCLECGDAFALERSLARHYDRRSMRIEVTCNH. The segment at 696 to 719 adopts a C2H2-type 2; degenerate zinc-finger fold; the sequence is HSCPECWSTFKGKQELVAHFQEVE. 3 C2H2-type zinc fingers span residues 817 to 840, 854 to 876, and 885 to 908; these read HKCP…ASQH, YKCV…IDTH, and FKCP…KDTH. The disordered stretch occupies residues 907–953; sequence THRETSNHDGTSTQNSLVKMESSDGEEWGRDEEEDKGKVSDANSAVP. Over residues 914–923 the composition is skewed to polar residues; that stretch reads HDGTSTQNSL. The span at 929–940 shows a compositional bias: acidic residues; it reads SDGEEWGRDEEE. 2 consecutive C2H2-type zinc fingers follow at residues 958-981 and 988-1011; these read WSCS…TEQH and FPCT…RVKH. The C2H2-type 8; degenerate zinc finger occupies 1018 to 1044; the sequence is FYCQLCTGEKRSFSSKLILEKHIQAQH. Residues 1045-1093 form a disordered region; it reads AGERGTATQSQAVPQFTDGADSSSEHDAGVLGGSSVEPESRLAESTLTR. 2 C2H2-type zinc fingers span residues 1137–1160 and 1210–1232; these read AQCQ…FISH and HICK…FRTH.

Belongs to the krueppel C2H2-type zinc-finger protein family. In terms of tissue distribution, widely expressed with highest levels in kidney, spleen and ovary.

It localises to the nucleus. In terms of biological role, may be involved in transcriptional regulation. The protein is Zinc finger protein 687a (znf687a) of Danio rerio (Zebrafish).